The sequence spans 197 residues: Probable GTP-binding protein EngB (197 aa).

An EngB-type G domain is found at 22–195 (GFPEIGLAGR…WQWIEAHTVG (174 aa)). GTP is bound by residues 30-37 (GRSNVGKS), 57-61 (GKTQT), 75-78 (DVPG), 142-145 (TKSD), and 174-176 (FSA). Mg(2+)-binding residues include Ser-37 and Thr-59.

It belongs to the TRAFAC class TrmE-Era-EngA-EngB-Septin-like GTPase superfamily. EngB GTPase family. Requires Mg(2+) as cofactor.

Functionally, necessary for normal cell division and for the maintenance of normal septation. The polypeptide is Probable GTP-binding protein EngB (Lactiplantibacillus plantarum (strain ATCC BAA-793 / NCIMB 8826 / WCFS1) (Lactobacillus plantarum)).